A 703-amino-acid polypeptide reads, in one-letter code: ABC transporter G family member 11 (703 aa).

Residues 50-293 enclose the ABC transporter domain; that stretch reads LTWQDLTVMV…FAQAGFPCPA (244 aa). Residue 87 to 94 participates in ATP binding; the sequence is GPSGSGKS. In terms of domain architecture, ABC transmembrane type-2 spans 382–594; sequence LQTYTLTKRS…ALQGQYQNDL (213 aa). N-linked (GlcNAc...) asparagine glycosylation is present at Asn394. 6 helical membrane passes run 406–426, 436–456, 485–505, 513–533, 540–560, and 628–648; these read LLIYILVTVCIGTIYLNVGTS, CASFVFGFVTFMSIGGFPSFV, TPFLIMITFISGTICYFMVGL, LFFVLCLYASVTVVESLMMAI, FLMGIIIGAGIQGIFMLVSGF, and INLSVILSMIIIYRIIFFIMI. N-linked (GlcNAc...) asparagine glycosylation is found at Asn671 and Asn675. Ser688 bears the Phosphoserine mark.

This sequence belongs to the ABC transporter superfamily. ABCG family. Eye pigment precursor importer (TC 3.A.1.204) subfamily. Homodimer. Forms heterodimers with ABCG9, ABCG12 and ABCG14 in epidermal cells. As to expression, expressed in seedlings, roots, stems, leaves, flowers, and siliques, mostly in epidermis, trichomes, vasculatures and developing tissues. Follows an uniparental maternal expression in the seed, thus being the product of a maternally expressed imprinted gene. Accumulates in the phloem. Transcripts seem to be transported from shoots to roots.

Its subcellular location is the cell membrane. Its function is as follows. Required for the cuticle, root suberin and pollen coat development by controlling cutin and maybe wax transport to the extracellular matrix. Involved in developmental plasticity and stress responses. Together with ABCG9 and ABCG14, required for vascular development by regulating lipid/sterol homeostasis. May be a transporter of lignin precursors during tracheary element differentiation. The polypeptide is ABC transporter G family member 11 (Arabidopsis thaliana (Mouse-ear cress)).